We begin with the raw amino-acid sequence, 441 residues long: Thymidine phosphorylase (441 aa).

It belongs to the thymidine/pyrimidine-nucleoside phosphorylase family. As to quaternary structure, homodimer.

The catalysed reaction is thymidine + phosphate = 2-deoxy-alpha-D-ribose 1-phosphate + thymine. Its pathway is pyrimidine metabolism; dTMP biosynthesis via salvage pathway; dTMP from thymine: step 1/2. Functionally, the enzymes which catalyze the reversible phosphorolysis of pyrimidine nucleosides are involved in the degradation of these compounds and in their utilization as carbon and energy sources, or in the rescue of pyrimidine bases for nucleotide synthesis. In Chromobacterium violaceum (strain ATCC 12472 / DSM 30191 / JCM 1249 / CCUG 213 / NBRC 12614 / NCIMB 9131 / NCTC 9757 / MK), this protein is Thymidine phosphorylase.